Here is a 432-residue protein sequence, read N- to C-terminus: Adenylosuccinate synthetase (432 aa).

Residues 13-19 and 41-43 each bind GTP; these read GDEGKGK and GHT. Asp-14 acts as the Proton acceptor in catalysis. Residues Asp-14 and Gly-41 each coordinate Mg(2+). Residues 14–17, 39–42, Thr-130, Arg-144, Gln-225, Thr-240, and Arg-304 each bind IMP; these read DEGK and NAGH. His-42 acts as the Proton donor in catalysis. Residue 300-306 coordinates substrate; it reads ATTGRRR. Residues Arg-306, 332 to 334, and 415 to 417 each bind GTP; these read KLD and STG.

The protein belongs to the adenylosuccinate synthetase family. Homodimer. Mg(2+) is required as a cofactor.

The protein localises to the cytoplasm. It catalyses the reaction IMP + L-aspartate + GTP = N(6)-(1,2-dicarboxyethyl)-AMP + GDP + phosphate + 2 H(+). It participates in purine metabolism; AMP biosynthesis via de novo pathway; AMP from IMP: step 1/2. Functionally, plays an important role in the de novo pathway of purine nucleotide biosynthesis. Catalyzes the first committed step in the biosynthesis of AMP from IMP. This Salmonella typhi protein is Adenylosuccinate synthetase.